A 323-amino-acid chain; its full sequence is Secreted frizzled-related protein 3 (323 aa).

An N-terminal signal peptide occupies residues 1-32 (MVCCGPGRMLLGWAGLLVLAALCLLQVPGAQA). The region spanning 33-150 (AACEPVRIPL…VYDRGVCISP (118 aa)) is the FZ domain. Cystine bridges form between C35-C96, C43-C89, C80-C119, C108-C147, and C112-C136. N-linked (GlcNAc...) asparagine glycosylation occurs at N49. Residues 178–298 (CKCKPVRATQ…WDMKLRHLGL (121 aa)) enclose the NTR domain. Positions 299–323 (GKTDASDSTQNQKSGRNSNPRPARS) are disordered. Residues 304–323 (SDSTQNQKSGRNSNPRPARS) are compositionally biased toward polar residues.

This sequence belongs to the secreted frizzled-related protein (sFRP) family. In terms of assembly, interacts with MYOC. In terms of tissue distribution, expressed in kidney, brain, testis. Weak expression in spleen and heart.

Its subcellular location is the secreted. In terms of biological role, soluble frizzled-related proteins (sFRPS) function as modulators of Wnt signaling through direct interaction with Wnts. They have a role in regulating cell growth and differentiation in specific cell types. SFRP3/FRZB appears to be involved in limb skeletogenesis. Antagonist of Wnt8 signaling. Regulates chondrocyte maturation and long bone development. This is Secreted frizzled-related protein 3 (Frzb) from Mus musculus (Mouse).